A 314-amino-acid chain; its full sequence is tRNA-cytidine(32) 2-sulfurtransferase (314 aa).

Residues 49–54 carry the PP-loop motif motif; the sequence is SGGKDS. 3 residues coordinate [4Fe-4S] cluster: C124, C127, and C215.

It belongs to the TtcA family. In terms of assembly, homodimer. The cofactor is Mg(2+). It depends on [4Fe-4S] cluster as a cofactor.

The protein resides in the cytoplasm. The catalysed reaction is cytidine(32) in tRNA + S-sulfanyl-L-cysteinyl-[cysteine desulfurase] + AH2 + ATP = 2-thiocytidine(32) in tRNA + L-cysteinyl-[cysteine desulfurase] + A + AMP + diphosphate + H(+). The protein operates within tRNA modification. Catalyzes the ATP-dependent 2-thiolation of cytidine in position 32 of tRNA, to form 2-thiocytidine (s(2)C32). The sulfur atoms are provided by the cysteine/cysteine desulfurase (IscS) system. This chain is tRNA-cytidine(32) 2-sulfurtransferase, found in Histophilus somni (strain 129Pt) (Haemophilus somnus).